Reading from the N-terminus, the 217-residue chain is Nucleoside diphosphate kinase homolog 5 (217 aa).

The NDK stretch occupies residues 18–151 (ERTLALIKPD…REIRFMFPHS (134 aa)).

It belongs to the NDK family.

It localises to the cell projection. It is found in the cilium. Functions as part of axonemal radial spoke complexes that play an important part in the motility of sperm and cilia. Does not seem to have nucleoside diphosphate kinase (NDPK) activity. Exhibits a 3'-5' exonuclease activity with a preference for single-stranded DNA, suggesting roles in DNA proofreading and repair. The protein is Nucleoside diphosphate kinase homolog 5 (nme5) of Danio rerio (Zebrafish).